The primary structure comprises 47 residues: Large ribosomal subunit protein bL36A (47 aa).

Belongs to the bacterial ribosomal protein bL36 family.

The polypeptide is Large ribosomal subunit protein bL36A (Yersinia enterocolitica serotype O:8 / biotype 1B (strain NCTC 13174 / 8081)).